We begin with the raw amino-acid sequence, 198 residues long: NAD(P)H dehydrogenase (quinone) (198 aa).

The Flavodoxin-like domain maps to 4–189; sequence VLVLYYSMYG…SIARYQGEYV (186 aa). Residues 10-15 and 78-80 contribute to the FMN site; these read SMYGHI and TRF. Residue Y12 participates in NAD(+) binding. W98 lines the substrate pocket. Residues 113 to 118 and H133 each bind FMN; that span reads STGTGG.

This sequence belongs to the WrbA family. The cofactor is FMN.

It catalyses the reaction a quinone + NADH + H(+) = a quinol + NAD(+). It carries out the reaction a quinone + NADPH + H(+) = a quinol + NADP(+). This chain is NAD(P)H dehydrogenase (quinone), found in Escherichia coli (strain SE11).